The following is a 105-amino-acid chain: Small ribosomal subunit protein uS10 (105 aa).

It belongs to the universal ribosomal protein uS10 family. Part of the 30S ribosomal subunit.

Involved in the binding of tRNA to the ribosomes. The chain is Small ribosomal subunit protein uS10 from Arthrospira platensis (Spirulina platensis).